The primary structure comprises 98 residues: Sarcosine oxidase subunit delta (98 aa).

Cys-6, Cys-9, His-59, and Cys-63 together coordinate Zn(2+).

It belongs to the SoxD family. Heterotetramer composed of subunits alpha (SoxA), beta (SoxB), gamma (SoxG) and delta (SoxD).

Its subcellular location is the cytoplasm. The catalysed reaction is sarcosine + (6S)-5,6,7,8-tetrahydrofolate + O2 = (6R)-5,10-methylene-5,6,7,8-tetrahydrofolate + glycine + H2O2. It catalyses the reaction sarcosine + O2 + H2O = formaldehyde + glycine + H2O2. Functionally, in the presence of tetrahydrofolate, catalyzes the oxidative demethylation of sarcosine to yield glycine, 5,10-methylenetetrahydrofolate and hydrogen peroxide. In the absence of tetrahydrofolate, catalyzes the oxidative demethylation of sarcosine to yield glycine, formaldehyde and hydrogen peroxide. This Corynebacterium sp. (strain P-1) protein is Sarcosine oxidase subunit delta.